The primary structure comprises 304 residues: Chromo domain-containing protein cec-1 (304 aa).

A Chromo domain is found at 8 to 66 (YTVESILEHRKKKGKSEFYIKWLGYDHTHNSWEPKENIVDPTLIEAFFTREAARKAEIK). The span at 63–73 (AEIKAKKDKMA) shows a compositional bias: basic and acidic residues. Disordered regions lie at residues 63-235 (AEIK…EIQL) and 248-304 (VEPA…AIIE). Residues 75-102 (GKKGASSKASASVSKASASTPARGAKAA) are compositionally biased toward low complexity. Residues 106–116 (PPKKSPPKRQR) show a composition bias toward basic residues. Positions 122–141 (IRPDSDTDEEHSSADKKSKA) are enriched in basic and acidic residues. Composition is skewed to acidic residues over residues 142–152 (EDEEEVEDDEE), 163–204 (EEPE…DVQL), and 212–233 (EEEEEKVEEKKEEEEEEEEEEI). A compositionally biased stretch (low complexity) spans 248 to 292 (VEPAVATPEPSEPSSSEKAVVENGSSSAAAGNSASKPEVSAVEVV). A compositionally biased stretch (acidic residues) spans 293–304 (TVEDDDDIAIIE).

It is found in the nucleus. The protein resides in the chromosome. The chain is Chromo domain-containing protein cec-1 (cec-1) from Caenorhabditis elegans.